Reading from the N-terminus, the 432-residue chain is Adenylosuccinate synthetase (432 aa).

Residues 13-19 and 41-43 contribute to the GTP site; these read GDEGKGK and GHT. Catalysis depends on D14, which acts as the Proton acceptor. The Mg(2+) site is built by D14 and G41. Residues 14 to 17, 39 to 42, T130, R144, Q225, T240, and R304 each bind IMP; these read DEGK and NAGH. H42 functions as the Proton donor in the catalytic mechanism. 300–306 contributes to the substrate binding site; that stretch reads AVTGRPR. GTP is bound by residues R306, 332 to 334, and 415 to 417; these read KLD and STG.

The protein belongs to the adenylosuccinate synthetase family. In terms of assembly, homodimer. Requires Mg(2+) as cofactor.

The protein resides in the cytoplasm. It catalyses the reaction IMP + L-aspartate + GTP = N(6)-(1,2-dicarboxyethyl)-AMP + GDP + phosphate + 2 H(+). It functions in the pathway purine metabolism; AMP biosynthesis via de novo pathway; AMP from IMP: step 1/2. Functionally, plays an important role in the de novo pathway of purine nucleotide biosynthesis. Catalyzes the first committed step in the biosynthesis of AMP from IMP. The polypeptide is Adenylosuccinate synthetase (Glaesserella parasuis serovar 5 (strain SH0165) (Haemophilus parasuis)).